Reading from the N-terminus, the 442-residue chain is 3-phosphoshikimate 1-carboxyvinyltransferase (442 aa).

3-phosphoshikimate contacts are provided by K25, S26, and R30. K25 is a binding site for phosphoenolpyruvate. 2 residues coordinate phosphoenolpyruvate: G97 and R125. 4 residues coordinate 3-phosphoshikimate: S170, Q172, D323, and K350. Q172 contacts phosphoenolpyruvate. The active-site Proton acceptor is D323. Phosphoenolpyruvate contacts are provided by R354 and R399.

This sequence belongs to the EPSP synthase family. In terms of assembly, monomer.

The protein localises to the cytoplasm. The catalysed reaction is 3-phosphoshikimate + phosphoenolpyruvate = 5-O-(1-carboxyvinyl)-3-phosphoshikimate + phosphate. Its pathway is metabolic intermediate biosynthesis; chorismate biosynthesis; chorismate from D-erythrose 4-phosphate and phosphoenolpyruvate: step 6/7. Functionally, catalyzes the transfer of the enolpyruvyl moiety of phosphoenolpyruvate (PEP) to the 5-hydroxyl of shikimate-3-phosphate (S3P) to produce enolpyruvyl shikimate-3-phosphate and inorganic phosphate. This Bartonella quintana (strain Toulouse) (Rochalimaea quintana) protein is 3-phosphoshikimate 1-carboxyvinyltransferase.